Here is a 101-residue protein sequence, read N- to C-terminus: Acylphosphatase-1 (101 aa).

Residue S2 is modified to N-acetylserine. The residue at position 2 (S2) is an N-acetylalanine. In terms of domain architecture, Acylphosphatase-like spans 11 to 101; the sequence is SVDYEVFGKV…LDYSDFQIVK (91 aa). Catalysis depends on residues R26 and N44.

The protein belongs to the acylphosphatase family. As to expression, organ-common type isozyme is found in many different tissues.

It carries out the reaction an acyl phosphate + H2O = a carboxylate + phosphate + H(+). This Sus scrofa (Pig) protein is Acylphosphatase-1 (ACYP1).